We begin with the raw amino-acid sequence, 114 residues long: Cytochrome c oxidase subunit 4B (114 aa).

3 helical membrane passes run 29–49, 56–76, and 89–109; these read QIVVFALMIFLTLMSFMAVAT, FAIPFIFILAVIQFALQLFFF, and AFMISGIFITVPTIAALMLLL.

The protein belongs to the cytochrome c oxidase bacterial subunit 4 family.

Its subcellular location is the cell membrane. The enzyme catalyses 4 Fe(II)-[cytochrome c] + O2 + 8 H(+)(in) = 4 Fe(III)-[cytochrome c] + 2 H2O + 4 H(+)(out). The chain is Cytochrome c oxidase subunit 4B (ctaF) from Alkalihalophilus pseudofirmus (strain ATCC BAA-2126 / JCM 17055 / OF4) (Bacillus pseudofirmus).